Reading from the N-terminus, the 305-residue chain is Carbamate kinase (305 aa).

Belongs to the carbamate kinase family.

The protein resides in the cytoplasm. The catalysed reaction is hydrogencarbonate + NH4(+) + ATP = carbamoyl phosphate + ADP + H2O + H(+). The protein operates within metabolic intermediate metabolism; carbamoyl phosphate degradation; CO(2) and NH(3) from carbamoyl phosphate: step 1/1. The sequence is that of Carbamate kinase (arcC) from Thermoplasma volcanium (strain ATCC 51530 / DSM 4299 / JCM 9571 / NBRC 15438 / GSS1).